Reading from the N-terminus, the 102-residue chain is Small ribosomal subunit protein uS10 (102 aa).

It belongs to the universal ribosomal protein uS10 family. As to quaternary structure, part of the 30S ribosomal subunit.

In terms of biological role, involved in the binding of tRNA to the ribosomes. This Coprothermobacter proteolyticus (strain ATCC 35245 / DSM 5265 / OCM 4 / BT) protein is Small ribosomal subunit protein uS10.